A 116-amino-acid chain; its full sequence is G antigen 2B/2C (116 aa).

Positions M1–C116 are disordered. Acidic residues-rich tracts occupy residues F31 to E44 and E86 to E95. The span at E102 to C116 shows a compositional bias: basic and acidic residues.

Belongs to the GAGE family. Expressed in a variety of tumor tissues but not in normal tissues, except testis.

Functionally, antigen, recognized on melanoma by autologous cytolytic T-lymphocytes. In Homo sapiens (Human), this protein is G antigen 2B/2C (GAGE2B).